A 312-amino-acid chain; its full sequence is Ribosomal RNA small subunit methyltransferase H (312 aa).

Residues 32–34, Asp52, Phe79, Asp100, and Gln107 contribute to the S-adenosyl-L-methionine site; that span reads AGH.

The protein belongs to the methyltransferase superfamily. RsmH family.

Its subcellular location is the cytoplasm. The enzyme catalyses cytidine(1402) in 16S rRNA + S-adenosyl-L-methionine = N(4)-methylcytidine(1402) in 16S rRNA + S-adenosyl-L-homocysteine + H(+). In terms of biological role, specifically methylates the N4 position of cytidine in position 1402 (C1402) of 16S rRNA. This chain is Ribosomal RNA small subunit methyltransferase H, found in Listeria monocytogenes serovar 1/2a (strain ATCC BAA-679 / EGD-e).